The chain runs to 163 residues: Cuticle protein 38 (163 aa).

Repeat copies occupy residues 7–10 (AAPV), 13–16 (AAPA), 20–23 (AAPA), 26–29 (AAPV), 56–59 (AAPA), 62–65 (AAPA), 68–71 (AAPA), 75–78 (AAPA), 81–84 (AAPA), 93–96 (AAPV), 123–126 (AAPA), 135–138 (AAPA), 141–144 (AAPA), and 156–159 (AAPV).

In terms of biological role, component of the cuticle of migratory locust which contains more than 100 different structural proteins. This is Cuticle protein 38 from Locusta migratoria (Migratory locust).